The following is a 436-amino-acid chain: UPF0597 protein DP0591 (436 aa).

Belongs to the UPF0597 family.

This chain is UPF0597 protein DP0591, found in Desulfotalea psychrophila (strain LSv54 / DSM 12343).